Consider the following 291-residue polypeptide: Nucleotide-binding protein Athe_0320 (291 aa).

9-16 (GMSGAGKS) is a binding site for ATP. 60–63 (DIRG) contacts GTP.

It belongs to the RapZ-like family.

In terms of biological role, displays ATPase and GTPase activities. The polypeptide is Nucleotide-binding protein Athe_0320 (Caldicellulosiruptor bescii (strain ATCC BAA-1888 / DSM 6725 / KCTC 15123 / Z-1320) (Anaerocellum thermophilum)).